The chain runs to 145 residues: Leghemoglobin-1 (145 aa).

A Globin domain is found at 3-145; the sequence is AFSDKQEALV…ELAAAIKKAY (143 aa). Nitrated tyrosine occurs at positions 26 and 31. Ser-46 lines the heme b pocket. Ser-46 is subject to Phosphoserine. Residue His-62 participates in O2 binding. Heme b is bound by residues Lys-65, His-93, and Lys-96. The residue at position 134 (Tyr-134) is a Nitrated tyrosine.

This sequence belongs to the plant globin family. As to quaternary structure, monomer. Nitrated in effective nodules and particularly in hypoxic conditions; this mechanism may play a protective role in the symbiosis by buffering toxic peroxynitrite NO(2)(-). Nitration level decrease during nodule senescence. Post-translationally, phosphorylation at Ser-46 disrupts the molecular environment of its porphyrin ring oxygen binding pocket, thus leading to a reduced oxygen consumption and to the delivery of oxygen O(2) to symbiosomes. Root nodules.

It localises to the cytoplasm. The protein localises to the cytosol. The protein resides in the nucleus. In terms of biological role, leghemoglobin that reversibly binds oxygen O(2) through a pentacoordinated heme iron. In root nodules, facilitates the diffusion of oxygen to the bacteroids while preventing the bacterial nitrogenase from being inactivated by buffering dioxygen, nitric oxide and carbon monoxide, and promoting the formation of reactive oxygen species (ROS, e.g. H(2)O(2)). This role is essential for symbiotic nitrogen fixation (SNF). The sequence is that of Leghemoglobin-1 from Vigna unguiculata (Cowpea).